The sequence spans 131 residues: Profilin-4 (131 aa).

A disulfide bridge links Cys-13 with Cys-115. The Involved in PIP2 interaction motif lies at 81-97 (AVIRGKKGAGGITIKKT). Phosphothreonine is present on Thr-111.

It belongs to the profilin family. Occurs in many kinds of cells as a complex with monomeric actin in a 1:1 ratio. Phosphorylated by MAP kinases.

The protein localises to the cytoplasm. It localises to the cytoskeleton. Functionally, binds to actin and affects the structure of the cytoskeleton. At high concentrations, profilin prevents the polymerization of actin, whereas it enhances it at low concentrations. The protein is Profilin-4 of Phleum pratense (Common timothy).